An 87-amino-acid chain; its full sequence is MAHKKGASSTRNGRDSNAQYLGVKRFGGQVVKAGEIIVRQRGTHFHPGAGVGRGKDDTLFALEAGAVEFGARGGRRVVNIVVAAAAE.

Belongs to the bacterial ribosomal protein bL27 family.

The sequence is that of Large ribosomal subunit protein bL27 from Renibacterium salmoninarum (strain ATCC 33209 / DSM 20767 / JCM 11484 / NBRC 15589 / NCIMB 2235).